A 481-amino-acid chain; its full sequence is Aspartyl/glutamyl-tRNA(Asn/Gln) amidotransferase subunit B (481 aa).

Belongs to the GatB/GatE family. GatB subfamily. Heterotrimer of A, B and C subunits.

The catalysed reaction is L-glutamyl-tRNA(Gln) + L-glutamine + ATP + H2O = L-glutaminyl-tRNA(Gln) + L-glutamate + ADP + phosphate + H(+). The enzyme catalyses L-aspartyl-tRNA(Asn) + L-glutamine + ATP + H2O = L-asparaginyl-tRNA(Asn) + L-glutamate + ADP + phosphate + 2 H(+). Its function is as follows. Allows the formation of correctly charged Asn-tRNA(Asn) or Gln-tRNA(Gln) through the transamidation of misacylated Asp-tRNA(Asn) or Glu-tRNA(Gln) in organisms which lack either or both of asparaginyl-tRNA or glutaminyl-tRNA synthetases. The reaction takes place in the presence of glutamine and ATP through an activated phospho-Asp-tRNA(Asn) or phospho-Glu-tRNA(Gln). In Carboxydothermus hydrogenoformans (strain ATCC BAA-161 / DSM 6008 / Z-2901), this protein is Aspartyl/glutamyl-tRNA(Asn/Gln) amidotransferase subunit B.